Reading from the N-terminus, the 28-residue chain is Dermaseptin-H2 (28 aa).

The protein belongs to the frog skin active peptide (FSAP) family. Dermaseptin subfamily. In terms of tissue distribution, expressed by the skin glands.

The protein resides in the secreted. Its function is as follows. Possesses a potent antimicrobial activity against Gram-positive and Gram-negative bacteria. Probably acts by disturbing membrane functions with its amphipathic structure. This is Dermaseptin-H2 from Pithecopus azureus (Orange-legged monkey tree frog).